We begin with the raw amino-acid sequence, 346 residues long: PhoH-like protein (346 aa).

G142 to T149 is an ATP binding site.

It belongs to the PhoH family.

Its subcellular location is the cytoplasm. This Escherichia coli O157:H7 protein is PhoH-like protein (ybeZ).